Consider the following 180-residue polypeptide: ATP synthase subunit delta (180 aa).

It belongs to the ATPase delta chain family. F-type ATPases have 2 components, F(1) - the catalytic core - and F(0) - the membrane proton channel. F(1) has five subunits: alpha(3), beta(3), gamma(1), delta(1), epsilon(1). F(0) has three main subunits: a(1), b(2) and c(10-14). The alpha and beta chains form an alternating ring which encloses part of the gamma chain. F(1) is attached to F(0) by a central stalk formed by the gamma and epsilon chains, while a peripheral stalk is formed by the delta and b chains.

Its subcellular location is the cell membrane. In terms of biological role, f(1)F(0) ATP synthase produces ATP from ADP in the presence of a proton or sodium gradient. F-type ATPases consist of two structural domains, F(1) containing the extramembraneous catalytic core and F(0) containing the membrane proton channel, linked together by a central stalk and a peripheral stalk. During catalysis, ATP synthesis in the catalytic domain of F(1) is coupled via a rotary mechanism of the central stalk subunits to proton translocation. Functionally, this protein is part of the stalk that links CF(0) to CF(1). It either transmits conformational changes from CF(0) to CF(1) or is implicated in proton conduction. In Bacillus cytotoxicus (strain DSM 22905 / CIP 110041 / 391-98 / NVH 391-98), this protein is ATP synthase subunit delta.